Here is a 360-residue protein sequence, read N- to C-terminus: Hyaluronan and proteoglycan link protein 3 (360 aa).

A signal peptide spans 1-17 (MGLLLLVPLLLLPGSYG). An Ig-like V-type domain is found at 48–164 (KLVVETPEET…ESGLVELELR (117 aa)). Intrachain disulfides connect Cys70–Cys146, Cys188–Cys259, Cys212–Cys233, Cys286–Cys356, and Cys311–Cys332. Link domains lie at 166–261 (VVFP…FCFA) and 266–358 (GRVY…YCYR).

The protein belongs to the HAPLN family. In terms of tissue distribution, widely expressed with highest levels in spleen and placenta.

Its subcellular location is the secreted. The protein localises to the extracellular space. The protein resides in the extracellular matrix. May function in hyaluronic acid binding. In Homo sapiens (Human), this protein is Hyaluronan and proteoglycan link protein 3 (HAPLN3).